Here is a 238-residue protein sequence, read N- to C-terminus: tRNA (guanine-N(7)-)-methyltransferase (238 aa).

S-adenosyl-L-methionine contacts are provided by Glu-68, Glu-93, Asp-120, and Asp-143. Asp-143 is an active-site residue. Substrate is bound by residues Lys-147, Asp-179, and 216–219 (TKFE).

This sequence belongs to the class I-like SAM-binding methyltransferase superfamily. TrmB family.

The catalysed reaction is guanosine(46) in tRNA + S-adenosyl-L-methionine = N(7)-methylguanosine(46) in tRNA + S-adenosyl-L-homocysteine. It participates in tRNA modification; N(7)-methylguanine-tRNA biosynthesis. Its function is as follows. Catalyzes the formation of N(7)-methylguanine at position 46 (m7G46) in tRNA. This is tRNA (guanine-N(7)-)-methyltransferase from Shewanella baltica (strain OS223).